We begin with the raw amino-acid sequence, 367 residues long: Probable cinnamyl alcohol dehydrogenase (367 aa).

Cysteine 47 contributes to the Zn(2+) binding site. Threonine 49 lines the NADP(+) pocket. Zn(2+)-binding residues include histidine 69, glutamate 70, cysteine 100, cysteine 103, cysteine 106, cysteine 114, and cysteine 163. Residues threonine 167, 188 to 193 (GLGGVG), 211 to 216 (SSSSKK), threonine 251, glycine 275, and 298 to 300 (SFI) each bind NADP(+).

The protein belongs to the zinc-containing alcohol dehydrogenase family. Homodimer. Zn(2+) serves as cofactor.

The catalysed reaction is (E)-cinnamyl alcohol + NADP(+) = (E)-cinnamaldehyde + NADPH + H(+). The enzyme catalyses (E)-coniferol + NADP(+) = (E)-coniferaldehyde + NADPH + H(+). It catalyses the reaction (E)-sinapyl alcohol + NADP(+) = (E)-sinapaldehyde + NADPH + H(+). It carries out the reaction (E)-4-coumaroyl alcohol + NADP(+) = (E)-4-coumaraldehyde + NADPH + H(+). The catalysed reaction is (E)-caffeyl alcohol + NADP(+) = (E)-caffeyl aldehyde + NADPH + H(+). Its pathway is aromatic compound metabolism; phenylpropanoid biosynthesis. Functionally, involved in lignin biosynthesis. May catalyze the final step specific for the production of lignin monomers, like coniferyl alcohol, sinapyl alcohol and 4-coumaryl alcohol. The chain is Probable cinnamyl alcohol dehydrogenase from Zea mays (Maize).